Consider the following 130-residue polypeptide: Histone H2A.6 (130 aa).

Over residues 1–12 (MAGRGKTLGSGG) the composition is skewed to gly residues. Residues 1–23 (MAGRGKTLGSGGAKKATSRSSKA) form a disordered region.

This sequence belongs to the histone H2A family. As to quaternary structure, the nucleosome is a histone octamer containing two molecules each of H2A, H2B, H3 and H4 assembled in one H3-H4 heterotetramer and two H2A-H2B heterodimers. The octamer wraps approximately 147 bp of DNA. Interacts with VIP1. Post-translationally, not ubiquitinated. In terms of tissue distribution, low level of expression, mainly in dividing tissues: floral buds, margins of newly emerging leaves, expanding leaves and the meristematic zone of root tips. Also expressed in many non-dividing cells of the elongation zone of the root.

It is found in the nucleus. The protein resides in the chromosome. In terms of biological role, core component of nucleosome. Nucleosomes wrap and compact DNA into chromatin, limiting DNA accessibility to the cellular machineries which require DNA as a template. Histones thereby play a central role in transcription regulation, DNA repair, DNA replication and chromosomal stability. DNA accessibility is regulated via a complex set of post-translational modifications of histones, also called histone code, and nucleosome remodeling. Required for the T-DNA integration step of plant transformation by Agrobacterium. May play an important role in illegitimate recombination. The chain is Histone H2A.6 (RAT5) from Arabidopsis thaliana (Mouse-ear cress).